A 470-amino-acid polypeptide reads, in one-letter code: Glutamyl-tRNA reductase (470 aa).

Residues 49 to 52 (TCNR), serine 109, 114 to 116 (ESQ), and glutamine 120 contribute to the substrate site. Residue cysteine 50 is the Nucleophile of the active site. 223–228 (GAGAVG) serves as a coordination point for NADP(+).

Belongs to the glutamyl-tRNA reductase family. In terms of assembly, homodimer.

The enzyme catalyses (S)-4-amino-5-oxopentanoate + tRNA(Glu) + NADP(+) = L-glutamyl-tRNA(Glu) + NADPH + H(+). It functions in the pathway porphyrin-containing compound metabolism; protoporphyrin-IX biosynthesis; 5-aminolevulinate from L-glutamyl-tRNA(Glu): step 1/2. Functionally, catalyzes the NADPH-dependent reduction of glutamyl-tRNA(Glu) to glutamate 1-semialdehyde (GSA). The protein is Glutamyl-tRNA reductase of Frankia alni (strain DSM 45986 / CECT 9034 / ACN14a).